The sequence spans 139 residues: Cystatin-11 (139 aa).

The signal sequence occupies residues 1 to 28; it reads MMARLWKTTWFLLAILVALVAFSYQVKR. 2 disulfide bridges follow: C94–C102 and C115–C135. N-linked (GlcNAc...) asparagine glycosylation is present at N134.

Belongs to the cystatin family.

Its subcellular location is the secreted. Functionally, has antibacterial activity against the Gram-negative bacteria E.coli. May play a role in sperm maturation and fertilization. In Rattus norvegicus (Rat), this protein is Cystatin-11 (Cst11).